The following is a 339-amino-acid chain: tRNA N6-adenosine threonylcarbamoyltransferase (339 aa).

Fe cation contacts are provided by H111 and H115. Substrate is bound by residues 139–143 (LVSGG), D172, G185, D189, and N280. D308 is a Fe cation binding site.

This sequence belongs to the KAE1 / TsaD family. The cofactor is Fe(2+).

The protein resides in the cytoplasm. The enzyme catalyses L-threonylcarbamoyladenylate + adenosine(37) in tRNA = N(6)-L-threonylcarbamoyladenosine(37) in tRNA + AMP + H(+). Functionally, required for the formation of a threonylcarbamoyl group on adenosine at position 37 (t(6)A37) in tRNAs that read codons beginning with adenine. Is involved in the transfer of the threonylcarbamoyl moiety of threonylcarbamoyl-AMP (TC-AMP) to the N6 group of A37, together with TsaE and TsaB. TsaD likely plays a direct catalytic role in this reaction. This Bacteroides thetaiotaomicron (strain ATCC 29148 / DSM 2079 / JCM 5827 / CCUG 10774 / NCTC 10582 / VPI-5482 / E50) protein is tRNA N6-adenosine threonylcarbamoyltransferase.